Consider the following 868-residue polypeptide: Probable mixed-linked glucan synthase 3 (868 aa).

The segment at 36 to 68 (ERKAAGGGGGGAKGKHWAAADKGERRAAKECGG) is disordered. A compositionally biased stretch (basic and acidic residues) spans 53-68 (AAADKGERRAAKECGG). A run of 2 helical transmembrane segments spans residues 86 to 106 (LLHPYRALIFARLIAVLLFFG) and 116 to 136 (IMWFWTMSVAGDVWFGFSWLL). Aspartate 211 is an active-site residue. Substrate-binding residues include aspartate 412 and aspartate 414. The active site involves aspartate 573. 6 helical membrane passes run 649–669 (IYPVTSLFILLYAISPVMWLI), 686–706 (LLMIILMIHMIGWLEIKWAGI), 717–737 (FFMIGSTSAYPTAVLHMVVNL), 771–791 (MLIPTMVVLVANIGAIGVAIG), 809–829 (IMGLLFNMWVMFLLYPFALAI), and 837–857 (PIILVVLLPIIFVIVALVYVA).

This sequence belongs to the glycosyltransferase 2 family. Plant cellulose synthase-like F subfamily.

It localises to the golgi apparatus membrane. Its function is as follows. May catalyze both beta-1,3 and beta-1,4 glycosidic linkage on beta-D-glucan. Essential for (1,3;1,4)-beta-D-glucans synthesis in grasses and cereals (Poaceae). The mixed-linked glucans (which are not present in walls of dicotyledons or most other monocotyledonous plants) are particularly important constituents of the walls of the starchy endosperm and aleurone cells of cereal grains such as oats, wheat, rice and barley. They can account for up to 70% by weight of the wall. The sequence is that of Probable mixed-linked glucan synthase 3 (CSLF3) from Oryza sativa subsp. indica (Rice).